Consider the following 572-residue polypeptide: Hemagglutinin-neuraminidase (572 aa).

Over 1–31 (MEYWKHTNHGKDAGNELETSMATHGNKLTNK) the chain is Intravirion. The chain crosses the membrane as a helical span at residues 32-52 (ITYILWTIILVLLSIVFIIVL). The Virion surface segment spans residues 53-572 (INSIKSEKAH…FKTEIPKSCS (520 aa)). Disulfide bonds link cysteine 190–cysteine 214 and cysteine 256–cysteine 269. An involved in neuraminidase activity region spans residues 252–257 (NRKSCS). N-linked (GlcNAc...) asparagine; by host glycosylation is found at asparagine 308 and asparagine 351. 2 cysteine pairs are disulfide-bonded: cysteine 355–cysteine 469 and cysteine 463–cysteine 473. Asparagine 523 carries N-linked (GlcNAc...) asparagine; by host glycosylation. Cysteine 535 and cysteine 544 are oxidised to a cystine.

The protein belongs to the paramyxoviruses hemagglutinin-neuraminidase family. Homotetramer; composed of disulfide-linked homodimers. Interacts with F protein trimer.

It is found in the virion membrane. Its subcellular location is the host cell membrane. It catalyses the reaction Hydrolysis of alpha-(2-&gt;3)-, alpha-(2-&gt;6)-, alpha-(2-&gt;8)- glycosidic linkages of terminal sialic acid residues in oligosaccharides, glycoproteins, glycolipids, colominic acid and synthetic substrates.. Attaches the virus to sialic acid-containing cell receptors and thereby initiating infection. Binding of HN protein to the receptor induces a conformational change that allows the F protein to trigger virion/cell membranes fusion. In terms of biological role, neuraminidase activity ensures the efficient spread of the virus by dissociating the mature virions from the neuraminic acid containing glycoproteins. The protein is Hemagglutinin-neuraminidase (HN) of Homo sapiens (Human).